Reading from the N-terminus, the 485-residue chain is ATP synthase subunit beta (485 aa).

Position 158-165 (158-165) interacts with ATP; that stretch reads GGAGVGKT.

The protein belongs to the ATPase alpha/beta chains family. As to quaternary structure, F-type ATPases have 2 components, CF(1) - the catalytic core - and CF(0) - the membrane proton channel. CF(1) has five subunits: alpha(3), beta(3), gamma(1), delta(1), epsilon(1). CF(0) has four main subunits: a(1), b(1), b'(1) and c(9-12).

Its subcellular location is the cell inner membrane. It catalyses the reaction ATP + H2O + 4 H(+)(in) = ADP + phosphate + 5 H(+)(out). Produces ATP from ADP in the presence of a proton gradient across the membrane. The catalytic sites are hosted primarily by the beta subunits. This Erythrobacter litoralis (strain HTCC2594) protein is ATP synthase subunit beta.